The primary structure comprises 677 residues: UPF0652 protein (677 aa).

A B box-type; atypical zinc finger spans residues 38 to 84 (ETPGMCCECTDQPAEVVCLQCQDELCTVCSTSLHRRGSRRSHIFKNK). 4 residues coordinate Zn(2+): Cys43, Cys46, Cys66, and His71. The segment covering 91 to 111 (YDELNKRDRQPPLHGKEDEKV) has biased composition (basic and acidic residues). 2 disordered regions span residues 91-142 (YDEL…NNNI) and 156-192 (LNPL…IDED). The segment covering 113 to 126 (NNNNNNNNTNNTNN) has biased composition (low complexity). Positions 163 to 178 (HTNQQRNGGGSNNHQI) are enriched in polar residues.

This sequence belongs to the UPF0652 family.

The protein is UPF0652 protein of Dictyostelium discoideum (Social amoeba).